We begin with the raw amino-acid sequence, 253 residues long: Imidazole glycerol phosphate synthase subunit HisF (253 aa).

Residues Asp11 and Asp130 contribute to the active site.

Belongs to the HisA/HisF family. In terms of assembly, heterodimer of HisH and HisF.

It is found in the cytoplasm. It carries out the reaction 5-[(5-phospho-1-deoxy-D-ribulos-1-ylimino)methylamino]-1-(5-phospho-beta-D-ribosyl)imidazole-4-carboxamide + L-glutamine = D-erythro-1-(imidazol-4-yl)glycerol 3-phosphate + 5-amino-1-(5-phospho-beta-D-ribosyl)imidazole-4-carboxamide + L-glutamate + H(+). It participates in amino-acid biosynthesis; L-histidine biosynthesis; L-histidine from 5-phospho-alpha-D-ribose 1-diphosphate: step 5/9. IGPS catalyzes the conversion of PRFAR and glutamine to IGP, AICAR and glutamate. The HisF subunit catalyzes the cyclization activity that produces IGP and AICAR from PRFAR using the ammonia provided by the HisH subunit. This is Imidazole glycerol phosphate synthase subunit HisF from Dehalococcoides mccartyi (strain CBDB1).